We begin with the raw amino-acid sequence, 410 residues long: Cysteine desulfurase IscS (410 aa).

Residues 79–80 (AT), Asn159, Gln187, and 207–209 (SGH) each bind pyridoxal 5'-phosphate. N6-(pyridoxal phosphate)lysine is present on Lys210. Thr248 provides a ligand contact to pyridoxal 5'-phosphate. Cys334 serves as the catalytic Cysteine persulfide intermediate. Cys334 contributes to the [2Fe-2S] cluster binding site.

The protein belongs to the class-V pyridoxal-phosphate-dependent aminotransferase family. NifS/IscS subfamily. In terms of assembly, homodimer. Forms a heterotetramer with IscU, interacts with other sulfur acceptors. Pyridoxal 5'-phosphate is required as a cofactor.

It localises to the cytoplasm. It catalyses the reaction (sulfur carrier)-H + L-cysteine = (sulfur carrier)-SH + L-alanine. Its pathway is cofactor biosynthesis; iron-sulfur cluster biosynthesis. In terms of biological role, master enzyme that delivers sulfur to a number of partners involved in Fe-S cluster assembly, tRNA modification or cofactor biosynthesis. Catalyzes the removal of elemental sulfur atoms from cysteine to produce alanine. Functions as a sulfur delivery protein for Fe-S cluster synthesis onto IscU, an Fe-S scaffold assembly protein, as well as other S acceptor proteins. This Ehrlichia chaffeensis (strain ATCC CRL-10679 / Arkansas) protein is Cysteine desulfurase IscS.